Consider the following 649-residue polypeptide: Acetyl-coenzyme A synthetase (649 aa).

Residues 198–201 (RRGK), T317, and N341 contribute to the CoA site. Residues 393–395 (GEP), 417–422 (DTWWQT), D506, and R521 contribute to the ATP site. A CoA-binding site is contributed by S529. R532 provides a ligand contact to ATP. Residues V543, H545, and V548 each coordinate Mg(2+). Position 612 is an N6-acetyllysine (K612). The interval 625–649 (QPVQGDTSTLEDPTVLERLQASPAL) is disordered.

The protein belongs to the ATP-dependent AMP-binding enzyme family. Mg(2+) serves as cofactor. Post-translationally, acetylated. Deacetylation by the SIR2-homolog deacetylase activates the enzyme.

The catalysed reaction is acetate + ATP + CoA = acetyl-CoA + AMP + diphosphate. In terms of biological role, catalyzes the conversion of acetate into acetyl-CoA (AcCoA), an essential intermediate at the junction of anabolic and catabolic pathways. AcsA undergoes a two-step reaction. In the first half reaction, AcsA combines acetate with ATP to form acetyl-adenylate (AcAMP) intermediate. In the second half reaction, it can then transfer the acetyl group from AcAMP to the sulfhydryl group of CoA, forming the product AcCoA. This is Acetyl-coenzyme A synthetase from Deinococcus radiodurans (strain ATCC 13939 / DSM 20539 / JCM 16871 / CCUG 27074 / LMG 4051 / NBRC 15346 / NCIMB 9279 / VKM B-1422 / R1).